A 377-amino-acid chain; its full sequence is All-trans-retinol dehydrogenase [NAD(+)] ADH4 (377 aa).

C47 contacts Zn(2+). 48–49 (PT) provides a ligand contact to NAD(+). Zn(2+) contacts are provided by H68, C98, C101, C104, C112, and C179. Residues 204–209 (GLGCVG), D228, K233, 297–299 (VGA), 320–322 (TFF), and R372 each bind NAD(+).

It belongs to the zinc-containing alcohol dehydrogenase family. Class-II subfamily. As to quaternary structure, dimer. Zn(2+) serves as cofactor. Liver specific.

It localises to the cytoplasm. It carries out the reaction all-trans-retinol + NAD(+) = all-trans-retinal + NADH + H(+). The catalysed reaction is 9-cis-retinol + NAD(+) = 9-cis-retinal + NADH + H(+). The enzyme catalyses 20-oxo-(5Z,8Z,11Z,14Z)-eicosatetraenoate + NAD(+) + H2O = (5Z,8Z,11Z,14Z)-eicosatetraenedioate + NADH + 2 H(+). It catalyses the reaction 20-hydroxy-(5Z,8Z,11Z,14Z)-eicosatetraenoate + NAD(+) = 20-oxo-(5Z,8Z,11Z,14Z)-eicosatetraenoate + NADH + H(+). It carries out the reaction 1,4-benzoquinone + NADH + H(+) = hydroquinone + NAD(+). Its activity is regulated as follows. Oxidation of 20-HETE is inhibited by low concentrations of N-heptylformamide. Oxidation of 20-HETE is a decreased by 55-65% by either all-trans-retinol or all-trans-retinoic acid. Strongly inhibited by omega-hydroxy fatty acids. Catalyzes the NAD-dependent oxidation of either all-trans-retinol or 9-cis-retinol. Also oxidizes long chain omega-hydroxy fatty acids, such as 20-HETE, producing both the intermediate aldehyde, 20-oxoarachidonate and the end product, a dicarboxylic acid, (5Z,8Z,11Z,14Z)-eicosatetraenedioate. Also catalyzes the reduction of benzoquinones. The protein is All-trans-retinol dehydrogenase [NAD(+)] ADH4 of Rattus norvegicus (Rat).